The following is a 101-amino-acid chain: Small ribosomal subunit protein bS6 (101 aa).

The protein belongs to the bacterial ribosomal protein bS6 family.

Functionally, binds together with bS18 to 16S ribosomal RNA. The sequence is that of Small ribosomal subunit protein bS6 from Pseudarthrobacter chlorophenolicus (strain ATCC 700700 / DSM 12829 / CIP 107037 / JCM 12360 / KCTC 9906 / NCIMB 13794 / A6) (Arthrobacter chlorophenolicus).